A 399-amino-acid chain; its full sequence is Large envelope protein (399 aa).

Met-1 is modified (N-acetylmethionine). A lipid anchor (N-myristoyl glycine; by host) is attached at Gly-2. The segment at 2 to 118 (GLSWTVPLEW…PPLRDTHPQA (117 aa)) is pre-S1. The pre-S stretch occupies residues 2–173 (GLSWTVPLEW…FSRIGDPAPN (172 aa)). Residues 2–180 (GLSWTVPLEW…APNMESITSG (179 aa)) are Virion surface; in external conformation-facing. Residues 2–252 (GLSWTVPLEW…PGYRWMCLRR (251 aa)) lie on the Intravirion; in internal conformation side of the membrane. N-linked (GlcNAc...) asparagine glycosylation occurs at Ser-4. The disordered stretch occupies residues 85–110 (KTLPADPPPASTNRQSGRQPTPITPP). Residues 95–105 (STNRQSGRQPT) show a composition bias toward polar residues. Residues 119 to 173 (MQWNSTTFHQALQDPRVRGLYFPAGGSSSGTVNPVPTTASLISSIFSRIGDPAPN) form a pre-S2 region. A helical transmembrane segment spans residues 181–201 (FLGPLLVLQAGFFLLTKILTI). Residues 202–252 (PQSLDSWWTSLNFLGGAPVCLGQNSQSPTSNHSPTSCPPICPGYRWMCLRR) lie on the Intravirion; in external conformation side of the membrane. A helical transmembrane segment spans residues 253–273 (FIIFLFILLLCLIFLLVLLDY). At 274–347 (QGMLPVCPLI…WASARFSWLS (74 aa)) the chain is on the virion surface side. An N-linked (GlcNAc...) asparagine; by host glycan is attached at Asn-319. A helical transmembrane segment spans residues 348-368 (LLVPFVQWFAGLSPTVWLSVI). The Intravirion segment spans residues 369–374 (WMMWYW). Residues 375-397 (GPSLYDILSPFIPLLPIFFCLWV) form a helical membrane-spanning segment. The Virion surface portion of the chain corresponds to 398-399 (YI).

It belongs to the orthohepadnavirus major surface antigen family. In terms of assembly, in its internal form (Li-HBsAg), interacts with the capsid protein and with the isoform S. Interacts with host chaperone CANX. As to quaternary structure, associates with host chaperone CANX through its pre-S2 N glycan; this association may be essential for isoform M proper secretion. Interacts with isoform L. Interacts with the antigens of satellite virus HDV (HDVAgs); this interaction is required for encapsidation of HDV genomic RNA. Isoform M is N-terminally acetylated by host at a ratio of 90%, and N-glycosylated by host at the pre-S2 region. Post-translationally, myristoylated.

Its subcellular location is the virion membrane. The large envelope protein exists in two topological conformations, one which is termed 'external' or Le-HBsAg and the other 'internal' or Li-HBsAg. In its external conformation the protein attaches the virus to cell receptors and thereby initiating infection. This interaction determines the species specificity and liver tropism. This attachment induces virion internalization predominantly through caveolin-mediated endocytosis. The large envelope protein also assures fusion between virion membrane and endosomal membrane. In its internal conformation the protein plays a role in virion morphogenesis and mediates the contact with the nucleocapsid like a matrix protein. Its function is as follows. The middle envelope protein plays an important role in the budding of the virion. It is involved in the induction of budding in a nucleocapsid independent way. In this process the majority of envelope proteins bud to form subviral lipoprotein particles of 22 nm of diameter that do not contain a nucleocapsid. This Homo sapiens (Human) protein is Large envelope protein.